A 453-amino-acid polypeptide reads, in one-letter code: Ribosomal protein uS12 methylthiotransferase RimO (453 aa).

The MTTase N-terminal domain occupies 5-120; that stretch reads PKVGFVSLGC…VMQAVHSHLP (116 aa). [4Fe-4S] cluster contacts are provided by Cys-14, Cys-50, Cys-79, Cys-151, Cys-155, and Cys-158. Positions 137 to 382 constitute a Radical SAM core domain; the sequence is LTPRHYAYLK…MEVAEEVSAN (246 aa). A TRAM domain is found at 385-453; that stretch reads QRKVGKTLKV…ADGHDLWGEV (69 aa).

This sequence belongs to the methylthiotransferase family. RimO subfamily. The cofactor is [4Fe-4S] cluster.

The protein resides in the cytoplasm. It catalyses the reaction L-aspartate(89)-[ribosomal protein uS12]-hydrogen + (sulfur carrier)-SH + AH2 + 2 S-adenosyl-L-methionine = 3-methylsulfanyl-L-aspartate(89)-[ribosomal protein uS12]-hydrogen + (sulfur carrier)-H + 5'-deoxyadenosine + L-methionine + A + S-adenosyl-L-homocysteine + 2 H(+). In terms of biological role, catalyzes the methylthiolation of an aspartic acid residue of ribosomal protein uS12. This is Ribosomal protein uS12 methylthiotransferase RimO from Burkholderia cenocepacia (strain HI2424).